The chain runs to 138 residues: Large ribosomal subunit protein mL54 (138 aa).

Residues 1–16 (MAARRLFGATGSWARW) constitute a mitochondrion transit peptide.

Belongs to the mitochondrion-specific ribosomal protein mL54 family. Component of the mitochondrial ribosome large subunit (39S) which comprises a 16S rRNA and about 50 distinct proteins.

Its subcellular location is the mitochondrion. This Bos taurus (Bovine) protein is Large ribosomal subunit protein mL54 (MRPL54).